The chain runs to 670 residues: DNA ligase (670 aa).

NAD(+) is bound by residues 32–36 (DSEYD), 81–82 (SL), and E114. Residue K116 is the N6-AMP-lysine intermediate of the active site. Residues R137, E174, K291, and K315 each coordinate NAD(+). The Zn(2+) site is built by C409, C412, C427, and C433. The 79-residue stretch at 592–670 (ASENLFKDKT…EEEFLAQITR (79 aa)) folds into the BRCT domain.

The protein belongs to the NAD-dependent DNA ligase family. LigA subfamily. The cofactor is Mg(2+). It depends on Mn(2+) as a cofactor.

The enzyme catalyses NAD(+) + (deoxyribonucleotide)n-3'-hydroxyl + 5'-phospho-(deoxyribonucleotide)m = (deoxyribonucleotide)n+m + AMP + beta-nicotinamide D-nucleotide.. In terms of biological role, DNA ligase that catalyzes the formation of phosphodiester linkages between 5'-phosphoryl and 3'-hydroxyl groups in double-stranded DNA using NAD as a coenzyme and as the energy source for the reaction. It is essential for DNA replication and repair of damaged DNA. This Haemophilus influenzae (strain ATCC 51907 / DSM 11121 / KW20 / Rd) protein is DNA ligase.